Reading from the N-terminus, the 964-residue chain is MVAKGRIIRVTGPLVVADGMKGAKMYEVVRVGELGLIGEIIRLEGDKAVIQVYEETAGVRPGEPVVGTGASLSVELGPGLLTSIYDGIQRPLEVIREKTGDFIARGVTAPALPRDKKWHFIPKAKVGDKVVGGDIIGEVPETSIIVHKIMVPPGIEGEIVEIAEEGDYTIEEVIAKVKTPSGEIKELKMYQRWPVRVKRPYKEKLPPEVPLITGQRVIDTFFPQAKGGTAAIPGPFGSGKCVDGDTLVLTKEFGLIKIKELYEKLDGKGRKIVEGNEEWTELEKPITVYGYKDGKIVEIKATHVYKGVSSGMVEIRTRTGRKIKVTPIHRLFTGRVTKDGLILKEVMAMHVKPGDRIAVVKKIDGGEYIKLDSSNVGEIKVPEILNEELAEFLGYLMANGTLKSGIIEIYCDDESLLERVNSLSLKLFGVGGRIVQKVDGKALVIQSKPLVDVLRRLGVPEDKKVENWKVPRELLLSPSNVVRAFVNAYIKGKEEVEITLASEEGAYELSYLFAKLGIYVTISKSGEYYKVRVSRRGNLDTIPVEVNGMPKVLPYEDFRKFAKSIGLEEVAENHLQHIIFDEVIDVRYIPEPQEVYDVTTETHNFVGGNMPTLLHNTVTQHQLAKWSDAQVVIYIGCGERGNEMTDVLEEFPKLKDPKTGKPLMERTVLIANTSNMPVAAREASIYTGITIAEYFRDMGYDVALMADSTSRWAEALREISGRLEEMPGEEGYPAYLASKLAEFYERAGRVVTLGSDYRVGSVSVIGAVSPPGGDFSEPVVQNTLRVVKVFWALDADLARRRHFPAINWLTSYSLYVDAVKDWWHKNIDPEWKAMRDKAMALLQKESELQEIVRIVGPDALPERERAILLVARMLREDYLQQDAFDEVDTYCPPEKQVTMMRVLLNFYDKTMEAINRGVPLEEIAKLPVREEIGRMKFERDVSKIRSLIDKTNEQFEELFKKYGA.

The DOD-type homing endonuclease domain maps to 392 to 518 (FLGYLMANGT…LSYLFAKLGI (127 aa)).

The protein belongs to the ATPase alpha/beta chains family. Has multiple subunits with at least A(3), B(3), C, D, E, F, H, I and proteolipid K(x). This protein undergoes a protein self splicing that involves a post-translational excision of the VDE intervening region (intein) followed by peptide ligation.

The protein localises to the cell membrane. The enzyme catalyses ATP + H2O + 4 H(+)(in) = ADP + phosphate + 5 H(+)(out). Functionally, component of the A-type ATP synthase that produces ATP from ADP in the presence of a proton gradient across the membrane. The A chain is the catalytic subunit. This is A-type ATP synthase subunit A from Pyrococcus horikoshii (strain ATCC 700860 / DSM 12428 / JCM 9974 / NBRC 100139 / OT-3).